Reading from the N-terminus, the 95-residue chain is Bacterial microcompartment shell protein EutM (95 aa).

The region spanning 6 to 90 is the BMC domain; sequence ALGMIETKGL…PHFEVDAILP (85 aa).

It belongs to the bacterial microcompartments protein family. Homohexamer; has a positively charged pore 9 Angstroms in diameter. The hexamers pack into a two-dimensional array. May interact with EutQ.

Its subcellular location is the bacterial microcompartment. Its pathway is amine and polyamine degradation; ethanolamine degradation. A component of the bacterial microcompartment (BMC) shell dedicated to ethanolamine degradation. Each homohexamer has a central pore with an opening of up to 9.0 Angstroms. Expression of the eut operon may allow this bacteria to use ethanolamine as a carbon, nitrogen and energy source. The pore probably allows metabolite passage into and out of the BMC. In Clostridioides difficile (strain 630) (Peptoclostridium difficile), this protein is Bacterial microcompartment shell protein EutM.